The chain runs to 166 residues: Orotate phosphoribosyltransferase (166 aa).

5-phospho-alpha-D-ribose 1-diphosphate contacts are provided by residues R83, K84, R86, H88, and 108–116 (EDVVTTGNS). Residues T112 and R140 each coordinate orotate.

The protein belongs to the purine/pyrimidine phosphoribosyltransferase family. PyrE subfamily. In terms of assembly, homodimer. It depends on Mg(2+) as a cofactor.

It catalyses the reaction orotidine 5'-phosphate + diphosphate = orotate + 5-phospho-alpha-D-ribose 1-diphosphate. It participates in pyrimidine metabolism; UMP biosynthesis via de novo pathway; UMP from orotate: step 1/2. Its function is as follows. Catalyzes the transfer of a ribosyl phosphate group from 5-phosphoribose 1-diphosphate to orotate, leading to the formation of orotidine monophosphate (OMP). This Thermoplasma volcanium (strain ATCC 51530 / DSM 4299 / JCM 9571 / NBRC 15438 / GSS1) protein is Orotate phosphoribosyltransferase.